Consider the following 183-residue polypeptide: Cell division protein ZapC (183 aa).

Belongs to the ZapC family. As to quaternary structure, interacts directly with FtsZ.

It localises to the cytoplasm. Its function is as follows. Contributes to the efficiency of the cell division process by stabilizing the polymeric form of the cell division protein FtsZ. Acts by promoting interactions between FtsZ protofilaments and suppressing the GTPase activity of FtsZ. This is Cell division protein ZapC from Xenorhabdus bovienii (strain SS-2004) (Xenorhabdus nematophila subsp. bovienii).